Consider the following 168-residue polypeptide: Myosin regulatory light chain 11 (168 aa).

A2 is modified (n,N,N-trimethylalanine). A Phosphoserine modification is found at S15. EF-hand domains are found at residues 24–59, 94–129, and 130–165; these read TQIQ…MGRL, DPED…QCDR, and FTPE…GEDK. Residues D37, N39, D41, and D48 each coordinate Ca(2+).

In terms of assembly, myosin is a hexamer of 2 heavy chains and 4 light chains. The N-terminus is blocked. N,N,N-trimethylalanine, found in other myosin light chains would not have been detected in the N-terminal tryptic peptide in PubMed:7358336 because it would remain trimethylated and ninhydrin negative after hydrolysis.

Myosin regulatory subunit that plays an essential to maintain muscle integrity during early development. Plays a role in muscle contraction. This is Myosin regulatory light chain 11 (MYL11) from Gallus gallus (Chicken).